The chain runs to 271 residues: Tryptophan synthase alpha chain (271 aa).

Active-site proton acceptor residues include Glu49 and Asp60.

It belongs to the TrpA family. In terms of assembly, tetramer of two alpha and two beta chains.

The catalysed reaction is (1S,2R)-1-C-(indol-3-yl)glycerol 3-phosphate + L-serine = D-glyceraldehyde 3-phosphate + L-tryptophan + H2O. The protein operates within amino-acid biosynthesis; L-tryptophan biosynthesis; L-tryptophan from chorismate: step 5/5. Functionally, the alpha subunit is responsible for the aldol cleavage of indoleglycerol phosphate to indole and glyceraldehyde 3-phosphate. The chain is Tryptophan synthase alpha chain from Paraburkholderia phymatum (strain DSM 17167 / CIP 108236 / LMG 21445 / STM815) (Burkholderia phymatum).